Reading from the N-terminus, the 82-residue chain is UPF0213 protein SH2523 (82 aa).

Positions 2–77 (AKHYVYIVKC…KTFSRQQKLK (76 aa)) constitute a GIY-YIG domain.

It belongs to the UPF0213 family.

The sequence is that of UPF0213 protein SH2523 from Staphylococcus haemolyticus (strain JCSC1435).